Reading from the N-terminus, the 326-residue chain is Glycerol-3-phosphate dehydrogenase [NAD(P)+] (326 aa).

Trp13, Arg33, and Lys107 together coordinate NADPH. Sn-glycerol 3-phosphate contacts are provided by Lys107, Gly135, and Ser137. NADPH is bound at residue Ala139. Sn-glycerol 3-phosphate is bound by residues Lys190, Asp243, Ser253, Arg254, and Asn255. Catalysis depends on Lys190, which acts as the Proton acceptor. Arg254 contributes to the NADPH binding site. Positions 273 and 275 each coordinate NADPH.

The protein belongs to the NAD-dependent glycerol-3-phosphate dehydrogenase family.

The protein resides in the cytoplasm. It catalyses the reaction sn-glycerol 3-phosphate + NAD(+) = dihydroxyacetone phosphate + NADH + H(+). The enzyme catalyses sn-glycerol 3-phosphate + NADP(+) = dihydroxyacetone phosphate + NADPH + H(+). Its pathway is membrane lipid metabolism; glycerophospholipid metabolism. In terms of biological role, catalyzes the reduction of the glycolytic intermediate dihydroxyacetone phosphate (DHAP) to sn-glycerol 3-phosphate (G3P), the key precursor for phospholipid synthesis. The sequence is that of Glycerol-3-phosphate dehydrogenase [NAD(P)+] from Brucella abortus (strain 2308).